The sequence spans 114 residues: Large ribosomal subunit protein uL22 (114 aa).

This sequence belongs to the universal ribosomal protein uL22 family. As to quaternary structure, part of the 50S ribosomal subunit.

Functionally, this protein binds specifically to 23S rRNA; its binding is stimulated by other ribosomal proteins, e.g. L4, L17, and L20. It is important during the early stages of 50S assembly. It makes multiple contacts with different domains of the 23S rRNA in the assembled 50S subunit and ribosome. Its function is as follows. The globular domain of the protein is located near the polypeptide exit tunnel on the outside of the subunit, while an extended beta-hairpin is found that lines the wall of the exit tunnel in the center of the 70S ribosome. The chain is Large ribosomal subunit protein uL22 from Ehrlichia chaffeensis (strain ATCC CRL-10679 / Arkansas).